A 540-amino-acid polypeptide reads, in one-letter code: Putative sel1-like repeat-containing protein R815 (540 aa).

Sel1-like repeat units follow at residues 129 to 164 (IDAQTNYGLVNEYGIGVKKNIKKAIKWYKLSCYKEN), 165 to 200 (LFGLLFLGSLYERGYGVSCDKHMAFNLYEKATKHNY), 201 to 236 (PAVKRQLAFMYRTGSGTTKNINKSHELYREAANQGY), 237 to 272 (PLAQYALALQCKYGHGCIKNYKEAETWLIRSYNNGC), 273 to 308 (LYATYSLARLYIETKSPLRNYSRAFELMQEAASENY), and 309 to 344 (LLAINYLAKIYKNGIGVNKNISRAIYWYYKAGNSTK).

In Acanthamoeba polyphaga (Amoeba), this protein is Putative sel1-like repeat-containing protein R815.